Reading from the N-terminus, the 843-residue chain is DNA-directed RNA polymerase subunit beta' (843 aa).

Zn(2+) contacts are provided by cysteine 70, cysteine 72, cysteine 85, and cysteine 88. Mg(2+) contacts are provided by aspartate 686, aspartate 688, and aspartate 690.

It belongs to the RNA polymerase beta' chain family. RpoC1 subfamily. In plastids the minimal PEP RNA polymerase catalytic core is composed of four subunits: alpha, beta, beta', and beta''. When a (nuclear-encoded) sigma factor is associated with the core the holoenzyme is formed, which can initiate transcription. The cofactor is Mg(2+). Requires Zn(2+) as cofactor.

The protein resides in the plastid. The protein localises to the chloroplast. It catalyses the reaction RNA(n) + a ribonucleoside 5'-triphosphate = RNA(n+1) + diphosphate. Its function is as follows. DNA-dependent RNA polymerase catalyzes the transcription of DNA into RNA using the four ribonucleoside triphosphates as substrates. The sequence is that of DNA-directed RNA polymerase subunit beta' from Trieres chinensis (Marine centric diatom).